Here is a 195-residue protein sequence, read N- to C-terminus: Putative nucleotidase BH1399 (195 aa).

Belongs to the 5'(3')-deoxyribonucleotidase family.

The sequence is that of Putative nucleotidase BH1399 from Halalkalibacterium halodurans (strain ATCC BAA-125 / DSM 18197 / FERM 7344 / JCM 9153 / C-125) (Bacillus halodurans).